The chain runs to 301 residues: Probable alpha-L-glutamate ligase (301 aa).

The ATP-grasp domain maps to 104 to 287; sequence LQLLSRRGIG…VAGMIIEYLE (184 aa). ATP-binding positions include lysine 141, 178-179, aspartate 187, and 211-213; these read EY and RSN. 3 residues coordinate Mg(2+): aspartate 248, glutamate 260, and asparagine 262. The Mn(2+) site is built by aspartate 248, glutamate 260, and asparagine 262.

Belongs to the RimK family. Mg(2+) is required as a cofactor. The cofactor is Mn(2+).

This Pseudomonas savastanoi pv. phaseolicola (strain 1448A / Race 6) (Pseudomonas syringae pv. phaseolicola (strain 1448A / Race 6)) protein is Probable alpha-L-glutamate ligase.